We begin with the raw amino-acid sequence, 55 residues long: Lantibiotic epilancin (55 aa).

The propeptide at 1–24 (MNNSLFDLNLNKGVETQKSDLSPQ) is cleaved by ElxP. Serine 25 bears the D-lactate; by the dehydratase ElxB and the dehydrogenase ElxO mark. Residue serine 27 is modified to 2,3-didehydroalanine (Ser); by the dehydratase ElxB. Threonine 31 is modified (2,3-didehydrobutyrine; by the dehydratase ElxB). Serine 32 carries the 2,3-didehydroalanine (Ser); by the dehydratase ElxB modification. Positions 36 to 40 (SKKYC) form a cross-link, lanthionine (Ser-Cys); by the dehydratase ElxB and the cyclase ElxC. 2 consecutive cross-links (beta-methyllanthionine (Thr-Cys); by the dehydratase ElxB and the cyclase ElxC) follow at residues 44–47 (TLTC) and 46–49 (TCGC). A 2,3-didehydrobutyrine; by the dehydratase ElxB modification is found at threonine 52.

This sequence belongs to the type A lantibiotic family. In terms of processing, maturation of this lantibiotic involves the enzymatic conversion of Thr, and Ser into dehydrated AA by ElxB and the formation of thioether bonds with cysteine by the cyclase ElxC. The next steps are cleavage of the leader peptide by ElxP and membrane translocation by ElxT. The leader peptide may be removed before membrane translocation, in contrast to other lantibiotics for which the cleavage occur after translocation. This is suggested by the probable cytoplasmic localization of the serine protease ElxP that cleaves the leader peptide. Post-translationally, it is not established whether the 2,3-didehydrobutyrine is the E- or Z-isomer. The N-terminal D-lactate is probably produced by dehydration of Ser-25 by ElxB, followed by proteolytic removal of the leader peptide by the serine protease ElxP and hydrolysis of the resulting new N-terminal dehydroalanine. This hydrolysis may occur spontaneously. The pyruvate group thus formed is reduced to D-lactate by the NADPH-dependent oxidoreductase ElxO. This N-terminal D-lactate protects the lantibiotic against degradation against aminopeptidase.

Its function is as follows. Lanthionine-containing peptide antibiotic (lantibiotic) active on Gram-positive bacteria such as staphylococci, enterococci and streptococci. The bactericidal activity of lantibiotics is based on depolarization of energized bacterial cytoplasmic membranes, initiated by the formation of aqueous transmembrane pores. This is Lantibiotic epilancin (elkA) from Staphylococcus epidermidis.